The primary structure comprises 92 residues: Small ribosomal subunit protein bS16 (92 aa).

This sequence belongs to the bacterial ribosomal protein bS16 family.

The protein is Small ribosomal subunit protein bS16 of Staphylococcus carnosus (strain TM300).